A 601-amino-acid chain; its full sequence is RNA polymerase II C-terminal domain phosphatase-like 5 (601 aa).

Residues 1 to 20 (MFVAKNLSPERESKRQKKEP) form a disordered region. Basic and acidic residues predominate over residues 8-20 (SPERESKRQKKEP). FCP1 homology domains are found at residues 84–259 (LNMK…TDES) and 381–553 (LNEK…DESE).

As to expression, expressed in roots, seedlings, hypocotyls, cotyledons, leaves, siliques and flowers.

It localises to the nucleus. It carries out the reaction O-phospho-L-seryl-[protein] + H2O = L-seryl-[protein] + phosphate. The catalysed reaction is O-phospho-L-threonyl-[protein] + H2O = L-threonyl-[protein] + phosphate. In terms of biological role, mediates the dephosphorylation of 'Ser-2' of the heptad repeats YSPTSPS in the C-terminal domain of the largest RNA polymerase II subunit (RPB1). This promotes the activity of RNA polymerase II. Positively regulates abscisic acid (ABA) and drought responses, including the regulation of specific genes expression. In Arabidopsis thaliana (Mouse-ear cress), this protein is RNA polymerase II C-terminal domain phosphatase-like 5.